The sequence spans 244 residues: Putative lipoprotein LprA (244 aa).

An N-terminal signal peptide occupies residues 1 to 24 (MKHPPCSVVAAATAILAVVLAIGG). Cysteine 25 carries the N-palmitoyl cysteine lipid modification. The S-diacylglycerol cysteine moiety is linked to residue cysteine 25.

It belongs to the LppX/LprAFG lipoprotein family.

Its subcellular location is the cell membrane. The sequence is that of Putative lipoprotein LprA (lprA) from Mycobacterium bovis (strain ATCC BAA-935 / AF2122/97).